Reading from the N-terminus, the 361-residue chain is G kinase-anchoring protein 1-A (361 aa).

2 disordered regions span residues 22–111 (DSSS…EDWQ) and 140–183 (FEES…KDFQ). Positions 35–48 (AHSSGKAHSGSAAR) are enriched in low complexity. Residues 51-79 (NKGNEKKKEKRRKKKEQQQSEANELRNLA) are a coiled coil. Positions 158–168 (KVNKKDKRKNN) are enriched in basic residues. Coiled coils occupy residues 246–296 (KDGR…QEGE) and 326–346 (AALE…VKYQ).

The protein belongs to the GKAP1 family.

It localises to the golgi apparatus. Functionally, may play a role in the regulation of insulin-dependent IRS1 tyrosine phosphorylation in adipocytes. This Xenopus laevis (African clawed frog) protein is G kinase-anchoring protein 1-A (gkap1-a).